Consider the following 178-residue polypeptide: ATP-dependent protease subunit HslV (178 aa).

T7 is a catalytic residue. Na(+) is bound by residues G162, C165, and T168.

The protein belongs to the peptidase T1B family. HslV subfamily. In terms of assembly, a double ring-shaped homohexamer of HslV is capped on each side by a ring-shaped HslU homohexamer. The assembly of the HslU/HslV complex is dependent on binding of ATP.

The protein resides in the cytoplasm. The catalysed reaction is ATP-dependent cleavage of peptide bonds with broad specificity.. With respect to regulation, allosterically activated by HslU binding. Protease subunit of a proteasome-like degradation complex believed to be a general protein degrading machinery. In Herminiimonas arsenicoxydans, this protein is ATP-dependent protease subunit HslV.